The primary structure comprises 517 residues: GMP synthase [glutamine-hydrolyzing] (517 aa).

A Glutamine amidotransferase type-1 domain is found at arginine 9–leucine 199. The Nucleophile role is filled by cysteine 86. Active-site residues include histidine 173 and glutamate 175. Residues tryptophan 200 to arginine 392 form the GMPS ATP-PPase domain. ATP is bound at residue serine 227–serine 233.

As to quaternary structure, homodimer.

It carries out the reaction XMP + L-glutamine + ATP + H2O = GMP + L-glutamate + AMP + diphosphate + 2 H(+). It functions in the pathway purine metabolism; GMP biosynthesis; GMP from XMP (L-Gln route): step 1/1. Catalyzes the synthesis of GMP from XMP. This chain is GMP synthase [glutamine-hydrolyzing], found in Aliivibrio fischeri (strain ATCC 700601 / ES114) (Vibrio fischeri).